A 384-amino-acid polypeptide reads, in one-letter code: Alanine racemase (384 aa).

The active-site Proton acceptor; specific for D-alanine is the Lys-42. Lys-42 is subject to N6-(pyridoxal phosphate)lysine. Arg-140 contributes to the substrate binding site. Catalysis depends on Tyr-271, which acts as the Proton acceptor; specific for L-alanine. Met-319 is a substrate binding site.

Belongs to the alanine racemase family. In terms of assembly, homodimer. Pyridoxal 5'-phosphate serves as cofactor.

The catalysed reaction is L-alanine = D-alanine. It functions in the pathway amino-acid biosynthesis; D-alanine biosynthesis; D-alanine from L-alanine: step 1/1. Catalyzes the interconversion of L-alanine and D-alanine. In Mycobacterium tuberculosis (strain CDC 1551 / Oshkosh), this protein is Alanine racemase (alr).